We begin with the raw amino-acid sequence, 223 residues long: Putative 3-methyladenine DNA glycosylase (223 aa).

The protein belongs to the DNA glycosylase MPG family.

In Pseudomonas syringae pv. tomato (strain ATCC BAA-871 / DC3000), this protein is Putative 3-methyladenine DNA glycosylase.